Consider the following 222-residue polypeptide: MKNNSQLLMPREKMLKFGISALTDVELLALFLRTGTRGKDVLTLAKEMLENFGSLYGLLTSEYEQFSGVHGIGVAKFAQLKGIAELARRYYNVRMREESPLLSPEMTREFLQSQLTGEEREIFMVIFLDSQHRVITHSRLFSGTLNHVEVHPREIIREAIKINASALILAHNHPSGCAEPSKADKLITERIIKSCQFMDLRVLDHIVIGRGEYVSFAERGWI.

Positions 100–222 (PLLSPEMTRE…YVSFAERGWI (123 aa)) constitute an MPN domain. Residues H171, H173, and D184 each coordinate Zn(2+). The short motif at 171-184 (HNHPSGCAEPSKAD) is the JAMM motif element.

This sequence belongs to the UPF0758 family. YicR subfamily.

This is UPF0758 protein YicR from Escherichia coli (strain 55989 / EAEC).